Reading from the N-terminus, the 561-residue chain is DNA mismatch repair protein MutL (561 aa).

It belongs to the DNA mismatch repair MutL/HexB family.

In terms of biological role, this protein is involved in the repair of mismatches in DNA. It is required for dam-dependent methyl-directed DNA mismatch repair. May act as a 'molecular matchmaker', a protein that promotes the formation of a stable complex between two or more DNA-binding proteins in an ATP-dependent manner without itself being part of a final effector complex. This chain is DNA mismatch repair protein MutL, found in Rippkaea orientalis (strain PCC 8801 / RF-1) (Cyanothece sp. (strain PCC 8801)).